A 217-amino-acid polypeptide reads, in one-letter code: Ufm1-specific protease 1 (217 aa).

Active-site residues include C53, D175, and H177.

It belongs to the peptidase C78 family. Widely expressed. Expressed at higher level in brain, heart, kidney and skeletal muscle.

The protein localises to the cytoplasm. It is found in the cytosol. Functionally, thiol-dependent isopeptidase that specifically mediate the processing of UFM1 precursors as well as the deconjugation of UFM1 from target proteins. Mainly responsible for the maturation of the UFM1 precursor, a prerequisite for conjugation reactions. In Mus musculus (Mouse), this protein is Ufm1-specific protease 1.